The following is a 384-amino-acid chain: Cytochrome b (384 aa).

4 helical membrane-spanning segments follow: residues 32–52 (FGFL…FLAI), 76–98 (WLLR…IHIS), 113–133 (TWVV…MGYV), and 179–199 (FFSF…VHMA). Heme b contacts are provided by histidine 82 and histidine 96. The heme b site is built by histidine 183 and histidine 197. Histidine 202 is an a ubiquinone binding site. The next 4 helical transmembrane spans lie at 225–245 (FIIK…LFVY), 289–309 (LGGV…PWIT), 321–341 (LYKK…WIGG), and 348–368 (YVVI…IFIP).

This sequence belongs to the cytochrome b family. As to quaternary structure, the main subunits of complex b-c1 are: cytochrome b, cytochrome c1 and the Rieske protein. It depends on heme b as a cofactor.

It localises to the mitochondrion inner membrane. Its function is as follows. Component of the ubiquinol-cytochrome c reductase complex (complex III or cytochrome b-c1 complex) that is part of the mitochondrial respiratory chain. The b-c1 complex mediates electron transfer from ubiquinol to cytochrome c. Contributes to the generation of a proton gradient across the mitochondrial membrane that is then used for ATP synthesis. This chain is Cytochrome b (MT-CYB), found in Cyanidium caldarium (Red alga).